The primary structure comprises 355 residues: MEVNVWNMTDLWTWFEDEFANATGMPPVEKDYSPCLVVTQTLNKYVVVVIYALVFLLSLLGNSLVMLVILYSRSNRSVTDVYLLNLAMADLLFALTMPIWAVSKEKGWIFGTPLCKVVSLVKEVNFYSGILLLACISVDRYLAIVHATRTLTQKRHLVKFICLGIWALSLILSLPFFLFRQVFSPNNSSPVCYEDLGHNTAKWRMVLRILPHTFGFILPLLVMLFCYGFTLRTLFQAHMGQKHRAMRVIFAVVLIFLLCWLPYNLVLLADTLMRTHVIQETCQRRNDIDRALDATEILGFLHSCLNPIIYAFIGQNFRNGFLKMLAARGLISKEFLTRHRVTSYTSSSTNVPSNL.

Residues Met1 to Gln40 are Extracellular-facing. Residues Asn7 and Asn21 are each glycosylated (N-linked (GlcNAc...) asparagine). Residues Thr41–Leu67 traverse the membrane as a helical segment. Over Val68 to Arg73 the chain is Cytoplasmic. The chain crosses the membrane as a helical span at residues Ser74–Leu92. Over Phe93 to Leu114 the chain is Extracellular. The helical transmembrane segment at Cys115–Val138 threads the bilayer. An intrachain disulfide couples Cys115 to Cys192. The Cytoplasmic portion of the chain corresponds to Asp139–Lys159. The helical transmembrane segment at Phe160–Ser184 threads the bilayer. The Extracellular segment spans residues Pro185–Arg204. Residues Met205–Arg232 form a helical membrane-spanning segment. At Thr233 to Arg247 the chain is on the cytoplasmic side. Residues Val248–Asp270 traverse the membrane as a helical segment. Residues Thr271 to Arg290 are Extracellular-facing. The helical transmembrane segment at Ala291–Ile313 threads the bilayer. Over Gly314 to Leu355 the chain is Cytoplasmic.

This sequence belongs to the G-protein coupled receptor 1 family. Interacts with IL8. Interacts with GNAI2. As to expression, neutrophils.

The protein localises to the cell membrane. In terms of biological role, receptor to interleukin-8, which is a powerful neutrophils chemotactic factor. Binding of IL-8 to the receptor causes activation of neutrophils. This response is mediated via a G-protein that activates a phosphatidylinositol-calcium second messenger system. The polypeptide is C-X-C chemokine receptor type 1 (CXCR1) (Oryctolagus cuniculus (Rabbit)).